The primary structure comprises 323 residues: tRNA dimethylallyltransferase (323 aa).

16–23 (GPTASGKT) is an ATP binding site. Substrate is bound at residue 18 to 23 (TASGKT). Interaction with substrate tRNA stretches follow at residues 41 to 44 (DSAL), 165 to 169 (QRIQR), 253 to 258 (RCVGYR), and 286 to 293 (KRQITWLR).

It belongs to the IPP transferase family. In terms of assembly, monomer. The cofactor is Mg(2+).

It catalyses the reaction adenosine(37) in tRNA + dimethylallyl diphosphate = N(6)-dimethylallyladenosine(37) in tRNA + diphosphate. Its function is as follows. Catalyzes the transfer of a dimethylallyl group onto the adenine at position 37 in tRNAs that read codons beginning with uridine, leading to the formation of N6-(dimethylallyl)adenosine (i(6)A). In Ralstonia nicotianae (strain ATCC BAA-1114 / GMI1000) (Ralstonia solanacearum), this protein is tRNA dimethylallyltransferase.